A 262-amino-acid polypeptide reads, in one-letter code: Putative hydro-lyase Sca_2211 (262 aa).

The protein belongs to the D-glutamate cyclase family.

This is Putative hydro-lyase Sca_2211 from Staphylococcus carnosus (strain TM300).